The sequence spans 258 residues: Acyl-[acyl-carrier-protein]--UDP-N-acetylglucosamine O-acyltransferase (258 aa).

Belongs to the transferase hexapeptide repeat family. LpxA subfamily. Homotrimer.

It localises to the cytoplasm. It carries out the reaction a (3R)-hydroxyacyl-[ACP] + UDP-N-acetyl-alpha-D-glucosamine = a UDP-3-O-[(3R)-3-hydroxyacyl]-N-acetyl-alpha-D-glucosamine + holo-[ACP]. It functions in the pathway glycolipid biosynthesis; lipid IV(A) biosynthesis; lipid IV(A) from (3R)-3-hydroxytetradecanoyl-[acyl-carrier-protein] and UDP-N-acetyl-alpha-D-glucosamine: step 1/6. Its function is as follows. Involved in the biosynthesis of lipid A, a phosphorylated glycolipid that anchors the lipopolysaccharide to the outer membrane of the cell. The sequence is that of Acyl-[acyl-carrier-protein]--UDP-N-acetylglucosamine O-acyltransferase from Ectopseudomonas mendocina (strain ymp) (Pseudomonas mendocina).